We begin with the raw amino-acid sequence, 148 residues long: Large ribosomal subunit protein uL15 (148 aa).

Basic residues predominate over residues 1-30 (MSTHKKKTRKLRGHVSHGHGRIGKHRKHPG). Positions 1-37 (MSTHKKKTRKLRGHVSHGHGRIGKHRKHPGGRGNAGG) are disordered.

It belongs to the universal ribosomal protein uL15 family.

The protein is Large ribosomal subunit protein uL15 (RpL27A) of Tenebrio molitor (Yellow mealworm beetle).